Here is a 506-residue protein sequence, read N- to C-terminus: Chorion-specific transcription factor GCMb (506 aa).

Positions 19–174 (LSWDINDPQM…KSETEARRSA (156 aa)) form a DNA-binding region, GCM. C81, C87, C91, C118, C121, C130, H157, and H159 together coordinate Zn(2+). Positions 155 to 172 (GVHDHPRPESKSETEARR) are enriched in basic and acidic residues. Positions 155–213 (GVHDHPRPESKSETEARRSAIKRQMASFYQPQKKRIRESEAEENQDSSGHFSNIPPLEN) are disordered. Positions 379-395 (LQTVITTTTKVSYQAYQ) are C-terminal conserved inhibitory domain (CCID).

The protein resides in the nucleus. Transcription factor that binds specific sequences on gene promoters and activate their transcription. Through the regulation of gene transcription, may play a role in parathyroid gland development. The protein is Chorion-specific transcription factor GCMb of Homo sapiens (Human).